The chain runs to 505 residues: GMP synthase [glutamine-hydrolyzing] (505 aa).

The 189-residue stretch at Ser2–Asp190 folds into the Glutamine amidotransferase type-1 domain. The active-site Nucleophile is the Cys79. Catalysis depends on residues His165 and Glu167. Residues Trp191 to Arg380 form the GMPS ATP-PPase domain. Ser218 to Ser224 contacts ATP.

Homodimer.

It catalyses the reaction XMP + L-glutamine + ATP + H2O = GMP + L-glutamate + AMP + diphosphate + 2 H(+). It functions in the pathway purine metabolism; GMP biosynthesis; GMP from XMP (L-Gln route): step 1/1. Functionally, catalyzes the synthesis of GMP from XMP. This chain is GMP synthase [glutamine-hydrolyzing], found in Deinococcus geothermalis (strain DSM 11300 / CIP 105573 / AG-3a).